The sequence spans 211 residues: MNHTKSSFIKLALECQVLKFGEFTLKSGRISPYFFNAGLFYHGNSIRQLGQFYAKTLLEQEISFEHLFGPAYKGIPLATATAVALAELGRDITVTFNRKEVKTHGEGGQLIGSPLTGRTVIIDDVITAGTAFRESQTLIKENGGILRGVIIALDRCERGLTEKSTLSEIREQGIEVYSIINLFDLIEFLKNDNQYEQVQKLESYHELYGAY.

Residue Lys-26 participates in 5-phospho-alpha-D-ribose 1-diphosphate binding. 34–35 (FF) serves as a coordination point for orotate. 5-phospho-alpha-D-ribose 1-diphosphate is bound by residues 72–73 (YK), Arg-98, Lys-99, Lys-102, His-104, and 123–131 (DDVITAGTA). Orotate contacts are provided by Thr-127 and Arg-155.

Belongs to the purine/pyrimidine phosphoribosyltransferase family. PyrE subfamily. As to quaternary structure, homodimer. Requires Mg(2+) as cofactor.

The catalysed reaction is orotidine 5'-phosphate + diphosphate = orotate + 5-phospho-alpha-D-ribose 1-diphosphate. Its pathway is pyrimidine metabolism; UMP biosynthesis via de novo pathway; UMP from orotate: step 1/2. Its function is as follows. Catalyzes the transfer of a ribosyl phosphate group from 5-phosphoribose 1-diphosphate to orotate, leading to the formation of orotidine monophosphate (OMP). This chain is Orotate phosphoribosyltransferase, found in Legionella pneumophila (strain Lens).